Consider the following 282-residue polypeptide: Pantothenate synthetase (282 aa).

ATP is bound at residue 30–37 (MGYYHAGH). The active-site Proton donor is His-37. Gln-61 is a (R)-pantoate binding site. Gln-61 serves as a coordination point for beta-alanine. 147-150 (GQKD) contributes to the ATP binding site. Gln-153 serves as a coordination point for (R)-pantoate. ATP-binding positions include Val-176 and 184-187 (LSSR).

The protein belongs to the pantothenate synthetase family. In terms of assembly, homodimer.

The protein resides in the cytoplasm. The catalysed reaction is (R)-pantoate + beta-alanine + ATP = (R)-pantothenate + AMP + diphosphate + H(+). Its pathway is cofactor biosynthesis; (R)-pantothenate biosynthesis; (R)-pantothenate from (R)-pantoate and beta-alanine: step 1/1. In terms of biological role, catalyzes the condensation of pantoate with beta-alanine in an ATP-dependent reaction via a pantoyl-adenylate intermediate. This is Pantothenate synthetase from Desulfovibrio desulfuricans (strain ATCC 27774 / DSM 6949 / MB).